A 280-amino-acid polypeptide reads, in one-letter code: uncharacterized protein (280 aa).

Positions 1-26 (MNILIKSAVKNFIVFSTALYTSFSFA) are cleaved as a signal peptide.

To E.coli YibQ.

This is an uncharacterized protein from Haemophilus influenzae (strain ATCC 51907 / DSM 11121 / KW20 / Rd).